A 325-amino-acid chain; its full sequence is MSGSLTLLKEKHIRYIESLDTKKHNFEYWLTEHLRLNGIYWGLTALCVLDSPETFVKEEVISFVLSCWDDKYGAFAPFPRHDAHLLTTLSAVQILATYDALDVLGKDRKVRLISFIRGNQLEDGSFQGDRFGEVDTRFVYTALSALSILGELTSEVVDPAVDFVLKCYNFDGGFGLCPNAESHAAQAFTCLGALAIANKLDMLSDDQLEEIGWWLCERQLPEGGLNGRPSKLPDVCYSWWVLSSLAIIGRLDWINYEKLTEFILKCQDEKKGGISDRPENEVDVFHTVFGVAGLSLMGYDNLVPIDPIYCMPKSVTSKFKKYPYK.

PFTB repeat units lie at residues 9-50 (KEKH…CVLD), 57-99 (KEEV…ATYD), 109-150 (KVRL…SILG), 157-198 (VDPA…AIAN), 208-249 (LEEI…AIIG), and 256-298 (YEKL…SLMG). Residues 183-185 (HAA) and 228-240 (RPSKLPDVCYSWW) contribute to the geranylgeranyl diphosphate site. Residues D234, C236, and H286 each coordinate Zn(2+).

The protein belongs to the protein prenyltransferase subunit beta family. Heterodimer of an alpha and a beta subunit. The cofactor is Zn(2+).

It catalyses the reaction geranylgeranyl diphosphate + L-cysteinyl-[protein] = S-geranylgeranyl-L-cysteinyl-[protein] + diphosphate. In terms of biological role, catalyzes the transfer of a geranyl-geranyl moiety from geranyl-geranyl pyrophosphate to proteins having the C-terminal -XCC or -XCXC, where both cysteines may become modified. Acts on YPT1 and SEC4. This is Geranylgeranyl transferase type-2 subunit beta (BET2) from Saccharomyces cerevisiae (strain ATCC 204508 / S288c) (Baker's yeast).